Here is a 470-residue protein sequence, read N- to C-terminus: Pancreatic lipase-related protein 2 (470 aa).

Positions 1-18 are cleaved as a signal peptide; it reads MMLFVWTTGLLLLATARG. A disulfide bond links C22 and C28. Residues 94–106 form a required for galactolipase activity region; it reads IHGFIDNGEKDWL. C110 and C121 are disulfide-bonded. S172 acts as the Nucleophile in catalysis. Catalysis depends on D196, which acts as the Charge relay system. Residues E207, R210, D212, and D215 each contribute to the Ca(2+) site. The cysteines at positions 257 and 281 are disulfide-linked. A required for galactolipase activity region spans residues 258-280; that stretch reads EKNIISTIVDVNGFLEGITSLAA. Residue H283 is the Charge relay system of the active site. Disulfide bonds link C305–C316 and C319–C324. N354 and N429 each carry an N-linked (GlcNAc...) asparagine glycan. The 113-residue stretch at 358 to 470 folds into the PLAT domain; that stretch reads WRYKVSVTLS…EDVLQSLSPC (113 aa). Cysteines 454 and 470 form a disulfide.

The protein belongs to the AB hydrolase superfamily. Lipase family. In terms of tissue distribution, pancreas.

The protein localises to the secreted. Its subcellular location is the zymogen granule membrane. The protein resides in the cell projection. It localises to the neuron projection. The catalysed reaction is a triacylglycerol + H2O = a diacylglycerol + a fatty acid + H(+). The enzyme catalyses a 1,2-diacyl-3-O-(beta-D-galactosyl)-sn-glycerol + 2 H2O = 3-beta-D-galactosyl-sn-glycerol + 2 a fatty acid + 2 H(+). It catalyses the reaction 1,2,3-tri-(9Z-octadecenoyl)-glycerol + H2O = di-(9Z)-octadecenoylglycerol + (9Z)-octadecenoate + H(+). It carries out the reaction di-(9Z)-octadecenoylglycerol + H2O = (9Z-octadecenoyl)-glycerol + (9Z)-octadecenoate + H(+). The catalysed reaction is (9Z-octadecenoyl)-glycerol + H2O = glycerol + (9Z)-octadecenoate + H(+). The enzyme catalyses 1-(9Z-octadecenoyl)-glycerol + H2O = glycerol + (9Z)-octadecenoate + H(+). It catalyses the reaction 1,2,3-tripropanoylglycerol + H2O = dipropanoylglycerol + propanoate + H(+). It carries out the reaction 1,2,3-tributanoylglycerol + H2O = dibutanoylglycerol + butanoate + H(+). The catalysed reaction is 1,2,3-trioctanoylglycerol + H2O = dioctanoylglycerol + octanoate + H(+). The enzyme catalyses 1,2-didecanoylglycerol + H2O = decanoylglycerol + decanoate + H(+). It catalyses the reaction long chain 1,2-diacyl-3-O-beta-D-galactosyl-sn-glycerol + H2O = long chain acyl-3-O-beta-D-galactosyl-sn-glycerol + a fatty acid + H(+). It carries out the reaction 1,2-dioctanoyl-3-O-beta-D-galactosyl-sn-glycerol + H2O = octanoyl-3-(beta-D-galactosyl)-sn-glycerol + octanoate + H(+). The catalysed reaction is 1,2-didodecanoyl-3-beta-D-galactosyl-sn-glycerol + H2O = dodecanoyl-3-beta-D-galactosyl-sn-glycerol + dodecanoate + H(+). The enzyme catalyses 1-beta-D-galactosyl-2,3-didodecanoyl-sn-glycerol + H2O = 1-beta-D-galactosyl-dodecanoyl-sn-glycerol + dodecanoate + H(+). It catalyses the reaction a 1,2-diacyl-3-O-[alpha-D-galactosyl-(1-&gt;6)-beta-D-galactosyl]-sn-glycerol + H2O = acyl-3-O-[alpha-D-galactosyl-(1-&gt;6)-beta-D-galactosyl]-sn-glycerol + a fatty acid + H(+). It carries out the reaction long chain 1,2-diacyl-3-O-[alpha-D-galactosyl-(1-&gt;6)-beta-D-galactosyl]-sn-glycerol + H2O = long chain acyl-3-O-[alpha-D-galactosyl-(1-&gt;6)-beta-D-galactosyl]-sn-glycerol + a fatty acid + H(+). The catalysed reaction is 1,2-dioctanoyl-3-O-[alpha-D-galactosyl-(1-&gt;6)-beta-D-galactosyl]-sn-glycerol + H2O = octanoyl-3-O-[alpha-D-galactosyl-(1-&gt;6)-beta-D-galactosyl]-sn-glycerol + octanoate + H(+). The enzyme catalyses 1,2-didodecanoyl-3-O-[alpha-D-galactosyl-(1-&gt;6)-beta-D-galactosyl]-sn-glycerol + H2O = dodecanoyl-3-O-[alpha-D-galactosyl-(1-&gt;6)-beta-D-galactosyl]-sn-glycerol + dodecanoate + H(+). It catalyses the reaction a 1,2-diacyl-sn-glycero-3-phosphocholine + H2O = a monoacyl-sn-glycero-3-phosphocholine + a fatty acid + H(+). It functions in the pathway glycerolipid metabolism; triacylglycerol degradation. The protein operates within glycolipid metabolism. Its activity is regulated as follows. Triacylglycerol lipase activity is inhibited by increasing bile salts concentrations and not reactivated by CLPS. In terms of biological role, lipase that primarily hydrolyzes triglycerides and galactosylglycerides. In neonates, may play a major role in pancreatic digestion of dietary fats such as milk fat globules enriched in long-chain triglycerides. Hydrolyzes short-, medium- and long-chain fatty acyls in triglycerides without apparent positional specificity. Can completely deacylate triacylglycerols. When the liver matures and bile salt synthesis increases, likely functions mainly as a galactolipase and monoacylglycerol lipase. Hydrolyzes monogalactosyldiglycerols (MGDG) and digalactosyldiacylglycerols (DGDG) present in a plant-based diet, releasing long-chain polyunsaturated fatty acids. Hydrolyzes medium- and long-chain fatty acyls in galactolipids. May act together with LIPF to hydrolyze partially digested triglycerides. Hydrolyzes long-chain monoglycerides with high efficiency. In cytotoxic T cells, contributes to perforin-dependent cell lysis, but is unlikely to mediate direct cytotoxicity. Also has low phospholipase activity. In neurons, required for the localization of the phospholipid 1-oleoyl-2-palmitoyl-PC (OPPC) to neurite tips through acyl chain remodeling of membrane phospholipids. The resulting OPPC-rich lipid membrane domain recruits the t-SNARE protein STX4 by selectively interacting with the STX4 transmembrane domain and this promotes surface expression of the dopamine transporter SLC6A3/DAT at neurite tips by facilitating fusion of SLC6A3-containing transport vesicles with the plasma membrane. In Myocastor coypus (Coypu), this protein is Pancreatic lipase-related protein 2.